Consider the following 300-residue polypeptide: MTQEGKLEQQFLDYLHSERNYSVNTSTAYENDLLDFRRFLNEQAIETYQQVTFLDVRIYLTELKQKSFSRTTVARKISSLRSFYTFLLRENVIAENPFTYVSHAKNQLRLPKFFYSEEMEALFQVVYEDNETLTLRDRVLLEVLYGTGIRVSECAGILLPDLDTSYQAILIRGKGNKERYVPFGVYAEDAITDYLPKRTELMTRYKKSHDALLVNHYGDPLTTRGIRYCLTKIISKASLTRKIHPHMLRHTFATDLLNNGADMRTVQELLGHASLASTQIYTHVTKEHLKSTYMKHHPRA.

In terms of domain architecture, Core-binding (CB) spans 2-88 (TQEGKLEQQF…SLRSFYTFLL (87 aa)). A Tyr recombinase domain is found at 109–294 (RLPKFFYSEE…TKEHLKSTYM (186 aa)). Catalysis depends on residues Arg150, Lys174, His246, Arg249, and His272. Residue Tyr281 is the O-(3'-phospho-DNA)-tyrosine intermediate of the active site.

It belongs to the 'phage' integrase family. XerC subfamily. In terms of assembly, forms a cyclic heterotetrameric complex composed of two molecules of XerC and two molecules of XerD.

The protein resides in the cytoplasm. Its function is as follows. Site-specific tyrosine recombinase, which acts by catalyzing the cutting and rejoining of the recombining DNA molecules. The XerC-XerD complex is essential to convert dimers of the bacterial chromosome into monomers to permit their segregation at cell division. It also contributes to the segregational stability of plasmids. This is Tyrosine recombinase XerC from Listeria monocytogenes serotype 4a (strain HCC23).